Here is a 668-residue protein sequence, read N- to C-terminus: mRNA cap guanine-N(7) methyltransferase (668 aa).

The segment covering 1-19 (MYDPARDSWEERDGDEARS) has biased composition (basic and acidic residues). Positions 1 to 281 (MYDPARDSWE…RAQVEEAMRA (281 aa)) are disordered. Residues 44 to 65 (GENNNTTDLQQHPDPSSKTTAS) show a composition bias toward polar residues. The span at 73–88 (SQPAQPTTQTPPSVST) shows a compositional bias: low complexity. A compositionally biased stretch (polar residues) spans 100 to 129 (KASNPQSLTSTAQNQLNKSNTTMENTSGSA). Residues 133–142 (PRADPSDKPN) are compositionally biased toward basic and acidic residues. Residues 148–157 (ASPTDQNGSQ) are compositionally biased toward polar residues. The span at 257–279 (LVDRETLRRRQEERERAQVEEAM) shows a compositional bias: basic and acidic residues. One can recognise an mRNA cap 0 methyltransferase domain in the interval 310–668 (SKIKGLRSFN…FYHAFCFYKV (359 aa)). 319 to 320 (NN) contributes to the mRNA binding site. S-adenosyl-L-methionine contacts are provided by residues lysine 323, glycine 366, aspartate 390, aspartate 428, 471–473 (MFT), and tyrosine 476. The interval 524–547 (ARQAQAKKEKSDEAPEDGEVEEDD) is disordered. Acidic residues predominate over residues 537–547 (APEDGEVEEDD).

It belongs to the class I-like SAM-binding methyltransferase superfamily. mRNA cap 0 methyltransferase family.

The protein localises to the nucleus. It catalyses the reaction a 5'-end (5'-triphosphoguanosine)-ribonucleoside in mRNA + S-adenosyl-L-methionine = a 5'-end (N(7)-methyl 5'-triphosphoguanosine)-ribonucleoside in mRNA + S-adenosyl-L-homocysteine. Its function is as follows. Responsible for methylating the 5'-cap structure of mRNAs. This is mRNA cap guanine-N(7) methyltransferase (abd1) from Aspergillus fumigatus (strain ATCC MYA-4609 / CBS 101355 / FGSC A1100 / Af293) (Neosartorya fumigata).